A 274-amino-acid chain; its full sequence is Bis(5'-nucleosyl)-tetraphosphatase, symmetrical (274 aa).

It belongs to the Ap4A hydrolase family.

The catalysed reaction is P(1),P(4)-bis(5'-adenosyl) tetraphosphate + H2O = 2 ADP + 2 H(+). In terms of biological role, hydrolyzes diadenosine 5',5'''-P1,P4-tetraphosphate to yield ADP. The sequence is that of Bis(5'-nucleosyl)-tetraphosphatase, symmetrical from Shewanella baltica (strain OS185).